The primary structure comprises 317 residues: ADIPOR-like receptor IZH2 (317 aa).

At 1 to 78 (MSTLLERTKS…TFKSLFYLHN (78 aa)) the chain is on the cytoplasmic side. Residues 79–99 (ESVNIYSHLIPALGFFTVLLL) form a helical membrane-spanning segment. Topologically, residues 100–110 (DKSTIKVFATT) are extracellular. The helical transmembrane segment at 111–131 (TWLDHMVIDLFYSGAFACLIL) threads the bilayer. At 132 to 153 (SSSFHCLKSHSLRIATLGNKLD) the chain is on the cytoplasmic side. Residues 154–174 (YLGICILIVTSMVSILYYGYF) form a helical membrane-spanning segment. Residues 175–176 (EK) are Extracellular-facing. Residues 177–197 (FSLFCLFALITVSFGIACSIV) form a helical membrane-spanning segment. At 198-212 (SLKDKFRKREWRPYR) the chain is on the cytoplasmic side. The helical transmembrane segment at 213 to 233 (AGLFVCFGLSSIIPIFSGLYC) threads the bilayer. Residues 234–242 (YSFSEIWTQ) lie on the Extracellular side of the membrane. Residues 243–263 (IQLFWVLLGGVLYIIGAVLYG) form a helical membrane-spanning segment. The Cytoplasmic segment spans residues 264 to 276 (MRFPEKICPGKFD). A helical transmembrane segment spans residues 277–297 (IWGHSHQLFHFLVVIAALCHL). Residues 298–317 (RGLLNSYELVHIKMENGIVS) lie on the Extracellular side of the membrane.

It belongs to the ADIPOR family.

It localises to the membrane. Probable receptor, which is involved in metabolic pathways that regulate lipid metabolism such as fatty acid oxidation. This chain is ADIPOR-like receptor IZH2 (IZH2), found in Saccharomyces cerevisiae (strain ATCC 204508 / S288c) (Baker's yeast).